We begin with the raw amino-acid sequence, 94 residues long: U1-theraphotoxin-Sp1a (94 aa).

The signal sequence occupies residues 1 to 22 (MIFLLPSIISVMLLAEPVLMLG). Residues 23–58 (DTEDADLMEMVQLSRPFFNPIIRAVELVELREERQR) constitute a propeptide that is removed on maturation. Intrachain disulfides connect Cys-60-Cys-78, Cys-67-Cys-83, and Cys-77-Cys-88. The residue at position 92 (Val-92) is a Valine amide.

This sequence belongs to the neurotoxin 14 (magi-1) family. OAIP-1 subfamily. Expressed by the venom gland.

It localises to the secreted. Its function is as follows. Probable ion channel inhibitor. Shows insecticidal activity. Acts synergistically with the neonicotinoid insecticide imidacloprid. Is neither a repellent that repels insects nor an attractant that is preferentially consumed by insects. Is very stable. This Selenotypus plumipes (Australian featherleg tarantula) protein is U1-theraphotoxin-Sp1a.